The chain runs to 383 residues: NADH-quinone oxidoreductase subunit D 1 (383 aa).

Belongs to the complex I 49 kDa subunit family. In terms of assembly, NDH-1 is composed of 14 different subunits. Subunits NuoB, C, D, E, F, and G constitute the peripheral sector of the complex.

Its subcellular location is the cell membrane. The enzyme catalyses a quinone + NADH + 5 H(+)(in) = a quinol + NAD(+) + 4 H(+)(out). Functionally, NDH-1 shuttles electrons from NADH, via FMN and iron-sulfur (Fe-S) centers, to quinones in the respiratory chain. The immediate electron acceptor for the enzyme in this species is believed to be a menaquinone. Couples the redox reaction to proton translocation (for every two electrons transferred, four hydrogen ions are translocated across the cytoplasmic membrane), and thus conserves the redox energy in a proton gradient. In Streptomyces coelicolor (strain ATCC BAA-471 / A3(2) / M145), this protein is NADH-quinone oxidoreductase subunit D 1.